Reading from the N-terminus, the 193-residue chain is Xanthine phosphoribosyltransferase (193 aa).

Xanthine is bound by residues L20 and T27. 128–132 (ANGQA) contributes to the 5-phospho-alpha-D-ribose 1-diphosphate binding site. K156 contributes to the xanthine binding site.

The protein belongs to the purine/pyrimidine phosphoribosyltransferase family. Xpt subfamily. In terms of assembly, homodimer.

It localises to the cytoplasm. The catalysed reaction is XMP + diphosphate = xanthine + 5-phospho-alpha-D-ribose 1-diphosphate. It participates in purine metabolism; XMP biosynthesis via salvage pathway; XMP from xanthine: step 1/1. In terms of biological role, converts the preformed base xanthine, a product of nucleic acid breakdown, to xanthosine 5'-monophosphate (XMP), so it can be reused for RNA or DNA synthesis. The protein is Xanthine phosphoribosyltransferase of Streptococcus pneumoniae (strain P1031).